Here is a 184-residue protein sequence, read N- to C-terminus: GTP cyclohydrolase 1 (184 aa).

Positions 74, 77, and 145 each coordinate Zn(2+).

The protein belongs to the GTP cyclohydrolase I family. In terms of assembly, toroid-shaped homodecamer, composed of two pentamers of five dimers.

The catalysed reaction is GTP + H2O = 7,8-dihydroneopterin 3'-triphosphate + formate + H(+). It functions in the pathway cofactor biosynthesis; 7,8-dihydroneopterin triphosphate biosynthesis; 7,8-dihydroneopterin triphosphate from GTP: step 1/1. The polypeptide is GTP cyclohydrolase 1 (folE) (Aquifex aeolicus (strain VF5)).